The following is a 2588-amino-acid chain: Histone-lysine N-methyltransferase, H3 lysine-36 specific (2588 aa).

Phosphoserine is present on residues serine 110 and serine 118. Disordered stretches follow at residues 209–264 (GSEQ…LGDT) and 277–307 (LSFQ…TSQE). Residues 235–249 (EKQKNKQRSEVDGSN) are compositionally biased toward basic and acidic residues. The span at 298 to 307 (GTSSPSTSQE) shows a compositional bias: polar residues. Phosphoserine occurs at positions 380 and 383. The disordered stretch occupies residues 383–403 (SADEKEKPCAKSRVRKSSDNI). A Glycyl lysine isopeptide (Lys-Gly) (interchain with G-Cter in SUMO2) cross-link involves residue lysine 802. Disordered stretches follow at residues 830–899 (ASYR…SDKR), 947–987 (ERKR…PGKE), and 1008–1133 (FDSK…PRLN). The segment covering 855-874 (GSSTPNSEKPGDSTQDSVHQ) has biased composition (polar residues). Positions 881 to 895 (SALSGELSSSLSSLA) are enriched in low complexity. The span at 1008–1033 (FDSKAKQSDPDKNLEKEPSFENRKGP) shows a compositional bias: basic and acidic residues. A compositionally biased stretch (basic residues) spans 1054 to 1073 (PKKRWQRLNQRRPKPGKRAN). Lysine 1237 participates in a covalent cross-link: Glycyl lysine isopeptide (Lys-Gly) (interchain with G-Cter in SUMO2). Residues 1279–1324 (ASPRPALESEELLVKTPGNYESKRQRKPTKKLLESNDLDPGFMPKK) form a disordered region. Serine 1408 is modified (phosphoserine). 3 consecutive PHD-type zinc fingers follow at residues 1441–1487 (ENVC…CHTG), 1488–1544 (IHTC…CHAA), and 1605–1649 (VSWC…CKAG). The region spanning 1654–1716 (YREIVWVKVG…QARVFPYMEG (63 aa)) is the PWWP domain. The region spanning 1788 to 1838 (SEIPRCNCKATDENPCGIDSECINRMLLYECHPTVCPAGVRCQNQCFSKRQ) is the AWS domain. The SET domain occupies 1840–1957 (PDVEIFRTLQ…AGTELTFNYN (118 aa)). Residues 1850–1852 (RGW), 1892–1895 (TNFY), 1918–1919 (NH), asparagine 1963, and lysine 1969 each bind S-adenosyl-L-methionine. Residues 1958–1964 (LECLGNG) form an inhibits enzyme activity in the absence of bound histone region. The Post-SET domain maps to 1964–1980 (GKTVCKCGAPNCSGFLG). The tract at residues 1989-2010 (VTEEKSRKFKRKPHGKRRSQGE) is disordered. The segment covering 1995–2006 (RKFKRKPHGKRR) has biased composition (basic residues). The PHD-type 4; atypical zinc-finger motif lies at 2016–2063 (EDECFSCGDAGQLVSCKKPGCPKVYHADCLNLTKRPAGKWECPWHQCD). 4 disordered regions span residues 2105 to 2320 (PCGP…PPPE), 2333 to 2423 (KEKA…PSEH), 2447 to 2521 (YESA…WGLG), and 2560 to 2588 (RGQD…SEKK). Basic and acidic residues predominate over residues 2179-2196 (RPPERTDSSSHLLDRIRD). A compositionally biased stretch (polar residues) spans 2201 to 2212 (GTKSQSLVSSQR). Residues 2213-2223 (PQDRPPAKEGP) show a composition bias toward basic and acidic residues. Low complexity predominate over residues 2232–2249 (SPMTRPSSSPSVSSLPLE). Over residues 2250–2261 (RPLRMTDSRLDK) the composition is skewed to basic and acidic residues. Phosphoserine is present on serine 2267. Threonine 2360 is modified (phosphothreonine). Serine 2369 carries the phosphoserine modification. A Glycyl lysine isopeptide (Lys-Gly) (interchain with G-Cter in SUMO2) cross-link involves residue lysine 2509.

Belongs to the class V-like SAM-binding methyltransferase superfamily. Interacts with AR DNA- and ligand-binding domains. Interacts with the ligand-binding domains of RARA and THRA in the absence of ligand; in the presence of ligand the interaction is severely disrupted but some binding still occurs. Interacts with the ligand-binding domains of RXRA and ESRRA only in the presence of ligand. Interacts with ZNF496. As to expression, expressed in the embryo and the outer region of the uterine decidua at early post-implantation 5.5 dpc stage. Uniformly expressed in embryonic and extraembryonic tissues during gastrulation stage 7.5 dpc. Expressed differentially after stage 14.5 dpc with highest expression in proliferating cells. Enriched in the telencephalic region of the brain, spinal cord, intestinal crypt, tooth buds, thymus and salivary glands at stage 16.5 dpc. Also expressed in the ossification region of developing bones and in the periosteum.

It is found in the nucleus. The protein localises to the chromosome. The enzyme catalyses L-lysyl(36)-[histone H3] + 2 S-adenosyl-L-methionine = N(6),N(6)-dimethyl-L-lysyl(36)-[histone H3] + 2 S-adenosyl-L-homocysteine + 2 H(+). Functionally, histone methyltransferase that dimethylates Lys-36 of histone H3 (H3K36me2). Transcriptional intermediary factor capable of negatively influencing transcription. May also positively influence transcription. Essential for early post-implantation development. In Mus musculus (Mouse), this protein is Histone-lysine N-methyltransferase, H3 lysine-36 specific.